The following is a 261-amino-acid chain: V-type proton ATPase subunit D (261 aa).

Ser-241 is subject to Phosphoserine.

The protein belongs to the V-ATPase D subunit family. In terms of assembly, V-ATPase is a heteromultimeric enzyme composed of a peripheral catalytic V1 complex (components A to H) attached to an integral membrane V0 proton pore complex (components: a, c, c'', d and e).

Its subcellular location is the vacuole membrane. In terms of biological role, subunit of the peripheral V1 complex of vacuolar ATPase. V-ATPase is responsible for acidifying a variety of intracellular compartments in eukaryotic cells, thus providing most of the energy required for transport processes in the vacuolar system. This Arabidopsis thaliana (Mouse-ear cress) protein is V-type proton ATPase subunit D (VHA-D).